The sequence spans 455 residues: Protein indeterminate-domain 7 (455 aa).

Residues 1 to 52 (MMMNRDILFHQQQQQQMEENMSNLTSASGDQASVSSGNRTETSGSNINQHHQ) are disordered. Residues 17 to 49 (MEENMSNLTSASGDQASVSSGNRTETSGSNINQ) are compositionally biased toward polar residues. Residue Ser-82 is modified to Phosphoserine. 2 consecutive C2H2-type zinc fingers follow at residues 92 to 114 (FICE…KRGH) and 134 to 164 (YVCP…FRKH). Positions 156–163 (IKKHFFRK) match the Nuclear localization signal motif. The segment at 169 to 192 (WKCEKCSKKYAVQSDWKAHAKTCG) adopts a C2H2-type 2; degenerate zinc-finger fold. Cys-171, Cys-174, His-187, Cys-191, Cys-198, Cys-200, His-213, and Cys-217 together coordinate Zn(2+). The CCHC-type 2; atypical zinc-finger motif lies at 196-219 (YKCDCGTLFSRRDSFITHRAFCDA). The interval 206-218 (RRDSFITHRAFCD) is SHR-binding. The segment at 235 to 351 (QASNSPHHHH…PEEEERSSRS (117 aa)) is disordered. Composition is skewed to low complexity over residues 248-265 (QQNI…SNSN) and 288-299 (SSNPNPNGNNGN).

The protein localises to the nucleus. Functionally, probable transcription factor. This is Protein indeterminate-domain 7 from Arabidopsis thaliana (Mouse-ear cress).